The following is a 122-amino-acid chain: Large ribosomal subunit protein uL14 (122 aa).

Belongs to the universal ribosomal protein uL14 family. As to quaternary structure, part of the 50S ribosomal subunit. Forms a cluster with proteins L3 and L19. In the 70S ribosome, L14 and L19 interact and together make contacts with the 16S rRNA in bridges B5 and B8.

Its function is as follows. Binds to 23S rRNA. Forms part of two intersubunit bridges in the 70S ribosome. The sequence is that of Large ribosomal subunit protein uL14 from Chelativorans sp. (strain BNC1).